Here is a 130-residue protein sequence, read N- to C-terminus: Small ribosomal subunit protein uS8 (130 aa).

This sequence belongs to the universal ribosomal protein uS8 family. As to quaternary structure, part of the 30S ribosomal subunit. Contacts proteins S5 and S12.

One of the primary rRNA binding proteins, it binds directly to 16S rRNA central domain where it helps coordinate assembly of the platform of the 30S subunit. The chain is Small ribosomal subunit protein uS8 from Histophilus somni (strain 129Pt) (Haemophilus somnus).